Consider the following 245-residue polypeptide: Enolase-phosphatase E1 (245 aa).

Aspartate 14 and glutamate 16 together coordinate Mg(2+). Residues 141–142 (SS) and lysine 175 each bind substrate. Aspartate 200 lines the Mg(2+) pocket.

Belongs to the HAD-like hydrolase superfamily. MasA/MtnC family. As to quaternary structure, monomer. It depends on Mg(2+) as a cofactor.

Its subcellular location is the cytoplasm. The protein localises to the nucleus. It catalyses the reaction 5-methylsulfanyl-2,3-dioxopentyl phosphate + H2O = 1,2-dihydroxy-5-(methylsulfanyl)pent-1-en-3-one + phosphate. It functions in the pathway amino-acid biosynthesis; L-methionine biosynthesis via salvage pathway; L-methionine from S-methyl-5-thio-alpha-D-ribose 1-phosphate: step 3/6. Its pathway is amino-acid biosynthesis; L-methionine biosynthesis via salvage pathway; L-methionine from S-methyl-5-thio-alpha-D-ribose 1-phosphate: step 4/6. Bifunctional enzyme that catalyzes the enolization of 2,3-diketo-5-methylthiopentyl-1-phosphate (DK-MTP-1-P) into the intermediate 2-hydroxy-3-keto-5-methylthiopentenyl-1-phosphate (HK-MTPenyl-1-P), which is then dephosphorylated to form the acireductone 1,2-dihydroxy-3-keto-5-methylthiopentene (DHK-MTPene). The protein is Enolase-phosphatase E1 of Drosophila grimshawi (Hawaiian fruit fly).